Reading from the N-terminus, the 445-residue chain is FAS-associated factor 2 (445 aa).

Ala-2 carries the N-acetylalanine modification. A UBA domain is found at 12–48; it reads EQTEKLLQFQDLTGIESMDQCRHTLEQHNWNIEAAVQ. Lys-167 carries the post-translational modification N6-acetyllysine. A coiled-coil region spans residues 275–350; sequence SERLEREERN…EEKERKLECL (76 aa). Residues 299 to 361 form a disordered region; it reads ASLRADQEKE…PEPSPDDPES (63 aa). Basic and acidic residues predominate over residues 303-348; it reads ADQEKERKKREERERKRRKEEEVQQQKLAEERRRQNLQEEKERKLE. The UBX domain maps to 357–439; it reads DDPESVKIIF…GLSHTEVLFV (83 aa).

In terms of assembly, identified in a complex that contains SEL1L, OS9, FAF2/UBXD8, UBE2J1/UBC6E and AUP1. Interacts with YOD1. Interacts (via N-terminus) with UBQLN2 (via C-terminus). Interacts with PNPLA2 and UBAC2. Interacts with ZFAND2B; probably through VCP. Interacts with LMBR1L. In terms of tissue distribution, broadly expressed, with highest levels in brain.

Its subcellular location is the cytoplasm. The protein resides in the lipid droplet. It localises to the endoplasmic reticulum. Plays an important role in endoplasmic reticulum-associated degradation (ERAD) that mediates ubiquitin-dependent degradation of misfolded endoplasmic reticulum proteins. By controlling the steady-state expression of the IGF1R receptor, indirectly regulates the insulin-like growth factor receptor signaling pathway. Involved in inhibition of lipid droplet degradation by binding to phospholipase PNPL2 and inhibiting its activity by promoting dissociation of PNPL2 from its endogenous activator, ABHD5 which inhibits the rate of triacylglycerol hydrolysis. Involved in stress granule disassembly: associates with ubiquitinated G3BP1 in response to heat shock, thereby promoting interaction between ubiquitinated G3BP1 and VCP, followed by G3BP1 extraction from stress granules and stress granule disassembly. This chain is FAS-associated factor 2, found in Homo sapiens (Human).